The primary structure comprises 365 residues: tRNA/tmRNA (uracil-C(5))-methyltransferase (365 aa).

5 residues coordinate S-adenosyl-L-methionine: glutamine 189, tyrosine 217, asparagine 222, glutamate 238, and aspartate 298. Cysteine 323 (nucleophile) is an active-site residue. Glutamate 357 serves as the catalytic Proton acceptor.

Belongs to the class I-like SAM-binding methyltransferase superfamily. RNA M5U methyltransferase family. TrmA subfamily.

The catalysed reaction is uridine(54) in tRNA + S-adenosyl-L-methionine = 5-methyluridine(54) in tRNA + S-adenosyl-L-homocysteine + H(+). It carries out the reaction uridine(341) in tmRNA + S-adenosyl-L-methionine = 5-methyluridine(341) in tmRNA + S-adenosyl-L-homocysteine + H(+). Functionally, dual-specificity methyltransferase that catalyzes the formation of 5-methyluridine at position 54 (m5U54) in all tRNAs, and that of position 341 (m5U341) in tmRNA (transfer-mRNA). The sequence is that of tRNA/tmRNA (uracil-C(5))-methyltransferase from Shewanella baltica (strain OS155 / ATCC BAA-1091).